Consider the following 383-residue polypeptide: Prokineticin receptor 2 (383 aa).

Over 1 to 54 (MGDQNGNTSFAPDLNPPQDHVSLLPLNYSYGDYDIPLDDDEDVTKTQTFFAAKI) the chain is Extracellular. Residues asparagine 7 and asparagine 27 are each glycosylated (N-linked (GlcNAc...) asparagine). Residues 55–75 (VIGVALAGIMLVCGVGNFVFI) form a helical membrane-spanning segment. The Cytoplasmic segment spans residues 76 to 89 (AALARYKKLRNLTN). Residues 90–110 (LLIANLAISDFLVAIVCCPFE) form a helical membrane-spanning segment. The Extracellular segment spans residues 111-136 (MDYYVVRQLSWEHGHVLCASVNYLRT). An intrachain disulfide couples cysteine 128 to cysteine 207. The helical transmembrane segment at 137–157 (VSLYVSTNALLAIAIDRYLAI) threads the bilayer. At 158–170 (VHPLKRMNYQTAS) the chain is on the cytoplasmic side. Residues 171–191 (FLIALVWMVSILIAIPSAYFT) form a helical membrane-spanning segment. Residues 192–222 (TETILVIVKNQEKLFCGQIWPVDQQLYYKSY) are Extracellular-facing. A helical membrane pass occupies residues 223–243 (FLFVFGLEFVGPVVTMTLCYA). Residues 244-272 (RISQELWFKAVPGFQTEQIRKRLRCRRKT) are Cytoplasmic-facing. A helical membrane pass occupies residues 273–293 (VLLLMGILTAYVLCWAPFYGF). Over 294–312 (TIVRDFFPTLVVKEKHYLT) the chain is Extracellular. Residues 313–333 (AFYVVECIAMSNSMINTICFV) form a helical membrane-spanning segment. Over 334 to 383 (TVKNNTMKYFKKMLLLHWRPSHYGSKSSADLDLKTSGVPATEEVDCIRLK) the chain is Cytoplasmic.

The protein belongs to the G-protein coupled receptor 1 family. Homodimer. Abundantly expressed in the CNS and reproductive organs with the highest levels in the cerebrum, cerebellum, testis and ovary.

The protein localises to the cell membrane. Receptor for prokineticin 2. Exclusively coupled to the G(q) subclass of heteromeric G proteins. Activation leads to mobilization of calcium, stimulation of phosphoinositide turnover and activation of p44/p42 mitogen-activated protein kinase. The polypeptide is Prokineticin receptor 2 (Prokr2) (Rattus norvegicus (Rat)).